We begin with the raw amino-acid sequence, 290 residues long: Formamidopyrimidine-DNA glycosylase (290 aa).

Pro2 serves as the catalytic Schiff-base intermediate with DNA. The active-site Proton donor is the Glu3. The active-site Proton donor; for beta-elimination activity is the Lys58. DNA is bound by residues His98, Arg126, and Arg171. The segment at 256–290 adopts an FPG-type zinc-finger fold; sequence FVYDRAGLPCRVCATPVRQIVQGQRSTFYCPKCQH. The active-site Proton donor; for delta-elimination activity is Arg280.

It belongs to the FPG family. As to quaternary structure, monomer. Requires Zn(2+) as cofactor.

It catalyses the reaction Hydrolysis of DNA containing ring-opened 7-methylguanine residues, releasing 2,6-diamino-4-hydroxy-5-(N-methyl)formamidopyrimidine.. It carries out the reaction 2'-deoxyribonucleotide-(2'-deoxyribose 5'-phosphate)-2'-deoxyribonucleotide-DNA = a 3'-end 2'-deoxyribonucleotide-(2,3-dehydro-2,3-deoxyribose 5'-phosphate)-DNA + a 5'-end 5'-phospho-2'-deoxyribonucleoside-DNA + H(+). Its function is as follows. Involved in base excision repair of DNA damaged by oxidation or by mutagenic agents. Acts as a DNA glycosylase that recognizes and removes damaged bases. Has a preference for oxidized purines, such as 7,8-dihydro-8-oxoguanine (8-oxoG). Has AP (apurinic/apyrimidinic) lyase activity and introduces nicks in the DNA strand. Cleaves the DNA backbone by beta-delta elimination to generate a single-strand break at the site of the removed base with both 3'- and 5'-phosphates. The protein is Formamidopyrimidine-DNA glycosylase of Cupriavidus taiwanensis (strain DSM 17343 / BCRC 17206 / CCUG 44338 / CIP 107171 / LMG 19424 / R1) (Ralstonia taiwanensis (strain LMG 19424)).